Here is a 432-residue protein sequence, read N- to C-terminus: MSSVVIVGSQWGDEGKGKMTDYLSQEADVVVRSQGGNNAGHTIAFDGKKFALRLVPSGIFAKDKLAVIGNGVVINPPALLKELHYLQDNGIDISGLRISSRSHITFPYHILLDKCQEEAKGDHKVGTTKNGIGPTYMDKVSRVGIRMCDLLEKDTFKEKLERNLAEKNELFTKLYHVDPISFDDIFESYYEYGQELKQYVTDTAQIVNDALDQDKKVLFEGAQGVMLDVDQGTYPYVTASNPIAGGVCTGVGVGPNKIETVVGICKAYSTRVGAGPFPTELTDEIGDQIRETGHEYGTVTGRPRRVGWFDSVAMRHARRVSGISCLSLNLLDVLTGLKTVKICTSYKLDGKQIDYYPASLKELERCEPVYEELPGWDEDITGAKKFEDLPINAQNYLKRVSELSESPLATVSVGADRIQTIIVKDPWEFAHK.

GTP-binding positions include 12-18 and 40-42; these read GDEGKGK and GHT. D13 serves as the catalytic Proton acceptor. Mg(2+) contacts are provided by D13 and G40. Residues 13–16, 38–41, T128, R142, Q223, T238, and R302 each bind IMP; these read DEGK and NAGH. H41 functions as the Proton donor in the catalytic mechanism. Position 298–304 (298–304) interacts with substrate; that stretch reads TVTGRPR. GTP is bound by residues R304, 330 to 332, and 412 to 414; these read LLD and SVG.

The protein belongs to the adenylosuccinate synthetase family. Homodimer. Requires Mg(2+) as cofactor.

The protein localises to the cytoplasm. It catalyses the reaction IMP + L-aspartate + GTP = N(6)-(1,2-dicarboxyethyl)-AMP + GDP + phosphate + 2 H(+). It functions in the pathway purine metabolism; AMP biosynthesis via de novo pathway; AMP from IMP: step 1/2. Functionally, plays an important role in the de novo pathway of purine nucleotide biosynthesis. Catalyzes the first committed step in the biosynthesis of AMP from IMP. This chain is Adenylosuccinate synthetase, found in Limosilactobacillus reuteri (strain DSM 20016) (Lactobacillus reuteri).